A 789-amino-acid polypeptide reads, in one-letter code: Probable phosphoketolase 1 (789 aa).

The protein belongs to the XFP family. Thiamine diphosphate is required as a cofactor.

This chain is Probable phosphoketolase 1, found in Rhizobium meliloti (strain 1021) (Ensifer meliloti).